The following is a 182-amino-acid chain: Oligoribonuclease (182 aa).

The region spanning 8–171 is the Exonuclease domain; sequence LIWIDLEMTG…DDIRESIKEL (164 aa). The active site involves Tyr129.

Belongs to the oligoribonuclease family.

The protein localises to the cytoplasm. Functionally, 3'-to-5' exoribonuclease specific for small oligoribonucleotides. The chain is Oligoribonuclease from Haemophilus influenzae (strain PittGG).